A 199-amino-acid chain; its full sequence is Acireductone dioxygenase 1 (199 aa).

The Fe(2+) site is built by His-99, His-101, Glu-105, and His-144. Positions 99, 101, 105, and 144 each coordinate Ni(2+).

It belongs to the acireductone dioxygenase (ARD) family. Fe(2+) serves as cofactor. The cofactor is Ni(2+).

The protein resides in the cytoplasm. It localises to the nucleus. It catalyses the reaction 1,2-dihydroxy-5-(methylsulfanyl)pent-1-en-3-one + O2 = 4-methylsulfanyl-2-oxobutanoate + formate + 2 H(+). It carries out the reaction 1,2-dihydroxy-5-(methylsulfanyl)pent-1-en-3-one + O2 = 3-(methylsulfanyl)propanoate + CO + formate + 2 H(+). The protein operates within amino-acid biosynthesis; L-methionine biosynthesis via salvage pathway; L-methionine from S-methyl-5-thio-alpha-D-ribose 1-phosphate: step 5/6. Functionally, catalyzes 2 different reactions between oxygen and the acireductone 1,2-dihydroxy-3-keto-5-methylthiopentene (DHK-MTPene) depending upon the metal bound in the active site. Fe-containing acireductone dioxygenase (Fe-ARD) produces formate and 2-keto-4-methylthiobutyrate (KMTB), the alpha-ketoacid precursor of methionine in the methionine recycle pathway. Ni-containing acireductone dioxygenase (Ni-ARD) produces methylthiopropionate, carbon monoxide and formate, and does not lie on the methionine recycle pathway. This Arabidopsis thaliana (Mouse-ear cress) protein is Acireductone dioxygenase 1 (ARD1).